The chain runs to 89 residues: Small ribosomal subunit protein uS14 (89 aa).

The protein belongs to the universal ribosomal protein uS14 family. As to quaternary structure, part of the 30S ribosomal subunit. Contacts proteins S3 and S10.

Binds 16S rRNA, required for the assembly of 30S particles and may also be responsible for determining the conformation of the 16S rRNA at the A site. The sequence is that of Small ribosomal subunit protein uS14 from Aster yellows witches'-broom phytoplasma (strain AYWB).